The following is a 432-amino-acid chain: Enolase (432 aa).

Gln-167 contacts (2R)-2-phosphoglycerate. Glu-209 (proton donor) is an active-site residue. Mg(2+)-binding residues include Asp-246, Glu-291, and Asp-318. The (2R)-2-phosphoglycerate site is built by Lys-343, Arg-372, Ser-373, and Lys-394. Lys-343 (proton acceptor) is an active-site residue.

The protein belongs to the enolase family. In terms of assembly, component of the RNA degradosome, a multiprotein complex involved in RNA processing and mRNA degradation. The cofactor is Mg(2+).

It is found in the cytoplasm. It localises to the secreted. The protein resides in the cell surface. It carries out the reaction (2R)-2-phosphoglycerate = phosphoenolpyruvate + H2O. The protein operates within carbohydrate degradation; glycolysis; pyruvate from D-glyceraldehyde 3-phosphate: step 4/5. Functionally, catalyzes the reversible conversion of 2-phosphoglycerate (2-PG) into phosphoenolpyruvate (PEP). It is essential for the degradation of carbohydrates via glycolysis. This chain is Enolase, found in Buchnera aphidicola subsp. Cinara cedri (strain Cc).